The primary structure comprises 219 residues: tRNA (guanine-N(7)-)-methyltransferase (219 aa).

Glutamate 46, glutamate 71, aspartate 100, and aspartate 122 together coordinate S-adenosyl-L-methionine. Aspartate 122 is a catalytic residue. Lysine 126 contributes to the substrate binding site. An interaction with RNA region spans residues 128 to 133 (KHEKRR). Substrate is bound by residues aspartate 158 and 199–202 (TEYE).

Belongs to the class I-like SAM-binding methyltransferase superfamily. TrmB family.

The enzyme catalyses guanosine(46) in tRNA + S-adenosyl-L-methionine = N(7)-methylguanosine(46) in tRNA + S-adenosyl-L-homocysteine. The protein operates within tRNA modification; N(7)-methylguanine-tRNA biosynthesis. Catalyzes the formation of N(7)-methylguanine at position 46 (m7G46) in tRNA. This is tRNA (guanine-N(7)-)-methyltransferase from Oenococcus oeni (strain ATCC BAA-331 / PSU-1).